The sequence spans 249 residues: Phosphatidylserine decarboxylase proenzyme (249 aa).

Residue serine 208 is the Schiff-base intermediate with substrate; via pyruvic acid of the active site. Serine 208 is subject to Pyruvic acid (Ser); by autocatalysis.

Belongs to the phosphatidylserine decarboxylase family. PSD-A subfamily. Heterodimer of a large membrane-associated beta subunit and a small pyruvoyl-containing alpha subunit. The cofactor is pyruvate. Post-translationally, is synthesized initially as an inactive proenzyme. Formation of the active enzyme involves a self-maturation process in which the active site pyruvoyl group is generated from an internal serine residue via an autocatalytic post-translational modification. Two non-identical subunits are generated from the proenzyme in this reaction, and the pyruvate is formed at the N-terminus of the alpha chain, which is derived from the carboxyl end of the proenzyme. The post-translation cleavage follows an unusual pathway, termed non-hydrolytic serinolysis, in which the side chain hydroxyl group of the serine supplies its oxygen atom to form the C-terminus of the beta chain, while the remainder of the serine residue undergoes an oxidative deamination to produce ammonia and the pyruvoyl prosthetic group on the alpha chain.

The protein resides in the cell membrane. The catalysed reaction is a 1,2-diacyl-sn-glycero-3-phospho-L-serine + H(+) = a 1,2-diacyl-sn-glycero-3-phosphoethanolamine + CO2. The protein operates within phospholipid metabolism; phosphatidylethanolamine biosynthesis; phosphatidylethanolamine from CDP-diacylglycerol: step 2/2. Functionally, catalyzes the formation of phosphatidylethanolamine (PtdEtn) from phosphatidylserine (PtdSer). The polypeptide is Phosphatidylserine decarboxylase proenzyme (Erythrobacter litoralis (strain HTCC2594)).